We begin with the raw amino-acid sequence, 202 residues long: MKDLTEKQEFVLQYISDTVREKGFPPTIREIGDQFGITAKGAYDHLKAIEKKGYIRTSKNQSRAIELLKGNADEALLVRASGIPLLGQVAAGAPILAEENIEEYIAVPDDLATKPGTFALRVKGDSMVEAGISDGDIAIIQKKDTARNGEIVVALIENEATLKVFFKEPDMIRLEPRNAKLKPIRTKKATIIGKLIGLYRIY.

Positions 28–47 form a DNA-binding region, H-T-H motif; sequence IREIGDQFGITAKGAYDHLK. Active-site for autocatalytic cleavage activity residues include S126 and K163.

Belongs to the peptidase S24 family. In terms of assembly, homodimer.

It carries out the reaction Hydrolysis of Ala-|-Gly bond in repressor LexA.. In terms of biological role, represses a number of genes involved in the response to DNA damage (SOS response), including recA and lexA. In the presence of single-stranded DNA, RecA interacts with LexA causing an autocatalytic cleavage which disrupts the DNA-binding part of LexA, leading to derepression of the SOS regulon and eventually DNA repair. The polypeptide is LexA repressor (Leptospira biflexa serovar Patoc (strain Patoc 1 / Ames)).